We begin with the raw amino-acid sequence, 404 residues long: Imidazolonepropionase (404 aa).

Fe(3+) contacts are provided by H73 and H75. Residues H73 and H75 each contribute to the Zn(2+) site. 4-imidazolone-5-propanoate contacts are provided by R82, Y145, and H178. Y145 is an N-formimidoyl-L-glutamate binding site. H243 serves as a coordination point for Fe(3+). H243 contacts Zn(2+). Q246 is a binding site for 4-imidazolone-5-propanoate. D318 contacts Fe(3+). Residue D318 participates in Zn(2+) binding. Residues N320 and G322 each contribute to the N-formimidoyl-L-glutamate site. S323 serves as a coordination point for 4-imidazolone-5-propanoate.

Belongs to the metallo-dependent hydrolases superfamily. HutI family. Requires Zn(2+) as cofactor. Fe(3+) is required as a cofactor.

The protein localises to the cytoplasm. The catalysed reaction is 4-imidazolone-5-propanoate + H2O = N-formimidoyl-L-glutamate. It functions in the pathway amino-acid degradation; L-histidine degradation into L-glutamate; N-formimidoyl-L-glutamate from L-histidine: step 3/3. In terms of biological role, catalyzes the hydrolytic cleavage of the carbon-nitrogen bond in imidazolone-5-propanoate to yield N-formimidoyl-L-glutamate. It is the third step in the universal histidine degradation pathway. The protein is Imidazolonepropionase of Bradyrhizobium sp. (strain BTAi1 / ATCC BAA-1182).